The following is a 104-amino-acid chain: Large ribosomal subunit protein uL24 (104 aa).

This sequence belongs to the universal ribosomal protein uL24 family. As to quaternary structure, part of the 50S ribosomal subunit.

In terms of biological role, one of two assembly initiator proteins, it binds directly to the 5'-end of the 23S rRNA, where it nucleates assembly of the 50S subunit. One of the proteins that surrounds the polypeptide exit tunnel on the outside of the subunit. The sequence is that of Large ribosomal subunit protein uL24 from Clostridium botulinum (strain Alaska E43 / Type E3).